The primary structure comprises 337 residues: C5a anaphylatoxin chemotactic receptor 2 (337 aa).

The Extracellular portion of the chain corresponds to 1–38; that stretch reads MGNDSVSYEYGDYSDLSDRPVDCLDGACLAIDPLRVAP. A glycan (N-linked (GlcNAc...) asparagine) is linked at asparagine 3. A helical transmembrane segment spans residues 39–61; it reads LPLYAAIFLVGVPGNAMVAWVAG. The Cytoplasmic segment spans residues 62 to 72; it reads KVARRRVGATW. The chain crosses the membrane as a helical span at residues 73-95; sequence LLHLAVADLLCCLSLPILAVPIA. Topologically, residues 96–114 are extracellular; sequence RGGHWPYGAVGCRALPSII. A disulfide bridge links cysteine 107 with cysteine 186. A helical transmembrane segment spans residues 115–137; it reads LLTMYASVLLLAALSADLCFLAL. Over 138–149 the chain is Cytoplasmic; the sequence is GPAWWSTVQRAC. The helical transmembrane segment at 150 to 172 threads the bilayer; it reads GVQVACGAAWTLALLLTVPSAIY. Topologically, residues 173-202 are extracellular; the sequence is RRLHQEHFPARLQCVVDYGGSSSTENAVTA. Residues 203-225 traverse the membrane as a helical segment; sequence IRFLFGFLGPLVAVASCHSALLC. The Cytoplasmic segment spans residues 226 to 237; it reads WAARRCRPLGTA. The chain crosses the membrane as a helical span at residues 238 to 260; it reads IVVGFFVCWAPYHLLGLVLTVAA. Topologically, residues 261–274 are extracellular; that stretch reads PNSALLARALRAEP. Residues 275–294 traverse the membrane as a helical segment; sequence LIVGLALAHSCLNPMLFLYF. Residues 295-337 lie on the Cytoplasmic side of the membrane; it reads GRAQLRRSLPAACHWALRESQGQDESVDSKKSTSHDLVSEMEV. Serine 320 is modified (phosphoserine).

This sequence belongs to the G-protein coupled receptor 1 family. In terms of assembly, interacts with C3 (the anaphylatoxin peptide C3a and the adipogenic hormone ASP); the interaction occurs with higher affinity for ASP, enhancing the phosphorylation and activation of GPR77, recruitment of ARRB2 to the cell surface and endocytosis of GRP77. Frontal cortex, hippocampus, hypothalamus, pons and liver.

The protein resides in the cell membrane. Functionally, receptor for the chemotactic and inflammatory C3a, C4a and C5a anaphylatoxin peptides and also for their dearginated forms ASP/C3adesArg, C4adesArg and C5adesArg respectively. Couples weakly to G(i)-mediated signaling pathways. The chain is C5a anaphylatoxin chemotactic receptor 2 (C5AR2) from Homo sapiens (Human).